An 88-amino-acid polypeptide reads, in one-letter code: Cytochrome c oxidase subunit 6B2 (88 aa).

Positions 1–21 (MLGVQAQMPAPGQWTTPPFDP) are disordered. The CHCH domain occupies 29–75 (TRNCYQNFLDYHRCVKTMDRRGKNTQACDYYFRVFHSLCPVSWVQRW). The short motif at 32–42 (CYQNFLDYHRC) is the Cx9C motif element. 2 disulfide bridges follow: Cys32–Cys67 and Cys42–Cys56. The Cx10C motif signature appears at 56 to 67 (CDYYFRVFHSLC).

This sequence belongs to the cytochrome c oxidase subunit 6B family. Component of the cytochrome c oxidase (complex IV, CIV), a multisubunit enzyme composed of 14 subunits. The complex is composed of a catalytic core of 3 subunits MT-CO1, MT-CO2 and MT-CO3, encoded in the mitochondrial DNA, and 11 supernumerary subunits COX4I, COX5A, COX5B, COX6A, COX6B, COX6C, COX7A, COX7B, COX7C, COX8 and NDUFA4, which are encoded in the nuclear genome. The complex exists as a monomer or a dimer and forms supercomplexes (SCs) in the inner mitochondrial membrane with NADH-ubiquinone oxidoreductase (complex I, CI) and ubiquinol-cytochrome c oxidoreductase (cytochrome b-c1 complex, complex III, CIII), resulting in different assemblies (supercomplex SCI(1)III(2)IV(1) and megacomplex MCI(2)III(2)IV(2)). As to expression, testis specific.

It is found in the mitochondrion inner membrane. It participates in energy metabolism; oxidative phosphorylation. In terms of biological role, component of the cytochrome c oxidase, the last enzyme in the mitochondrial electron transport chain which drives oxidative phosphorylation. The respiratory chain contains 3 multisubunit complexes succinate dehydrogenase (complex II, CII), ubiquinol-cytochrome c oxidoreductase (cytochrome b-c1 complex, complex III, CIII) and cytochrome c oxidase (complex IV, CIV), that cooperate to transfer electrons derived from NADH and succinate to molecular oxygen, creating an electrochemical gradient over the inner membrane that drives transmembrane transport and the ATP synthase. Cytochrome c oxidase is the component of the respiratory chain that catalyzes the reduction of oxygen to water. Electrons originating from reduced cytochrome c in the intermembrane space (IMS) are transferred via the dinuclear copper A center (CU(A)) of subunit 2 and heme A of subunit 1 to the active site in subunit 1, a binuclear center (BNC) formed by heme A3 and copper B (CU(B)). The BNC reduces molecular oxygen to 2 water molecules using 4 electrons from cytochrome c in the IMS and 4 protons from the mitochondrial matrix. This Rattus norvegicus (Rat) protein is Cytochrome c oxidase subunit 6B2 (Cox6b2).